Consider the following 21-residue polypeptide: thr operon leader peptide (21 aa).

This sequence belongs to the thr operon leader peptide family.

This protein is involved in control of the biosynthesis of threonine. The protein is thr operon leader peptide of Shigella boydii serotype 18 (strain CDC 3083-94 / BS512).